The sequence spans 186 residues: Dihydrofolate reductase (186 aa).

The DHFR domain occupies R2–V180. Residues A8 and G14–G20 contribute to the NADP(+) site. D28–K33 provides a ligand contact to substrate. NADP(+) is bound at residue R51–T53. Residue R67 participates in substrate binding. Residues S73–T75 and G112–E119 each bind NADP(+).

This sequence belongs to the dihydrofolate reductase family. In terms of assembly, monomer.

The catalysed reaction is (6S)-5,6,7,8-tetrahydrofolate + NADP(+) = 7,8-dihydrofolate + NADPH + H(+). Its pathway is cofactor biosynthesis; tetrahydrofolate biosynthesis; 5,6,7,8-tetrahydrofolate from 7,8-dihydrofolate: step 1/1. Its function is as follows. Key enzyme in folate metabolism. Contributes to the de novo mitochondrial thymidylate biosynthesis pathway. Catalyzes an essential reaction for de novo glycine and purine synthesis, and for DNA precursor synthesis. In Schistosoma mansoni (Blood fluke), this protein is Dihydrofolate reductase.